The following is a 268-amino-acid chain: Ribosomal RNA small subunit methyltransferase A (268 aa).

6 residues coordinate S-adenosyl-L-methionine: Asn-19, Leu-21, Gly-46, Glu-67, Asp-92, and Asn-113.

This sequence belongs to the class I-like SAM-binding methyltransferase superfamily. rRNA adenine N(6)-methyltransferase family. RsmA subfamily.

It localises to the cytoplasm. The catalysed reaction is adenosine(1518)/adenosine(1519) in 16S rRNA + 4 S-adenosyl-L-methionine = N(6)-dimethyladenosine(1518)/N(6)-dimethyladenosine(1519) in 16S rRNA + 4 S-adenosyl-L-homocysteine + 4 H(+). In terms of biological role, specifically dimethylates two adjacent adenosines (A1518 and A1519) in the loop of a conserved hairpin near the 3'-end of 16S rRNA in the 30S particle. May play a critical role in biogenesis of 30S subunits. This is Ribosomal RNA small subunit methyltransferase A from Tolumonas auensis (strain DSM 9187 / NBRC 110442 / TA 4).